A 294-amino-acid chain; its full sequence is Homeobox-leucine zipper protein ATHB-16 (294 aa).

Over residues Met-1–Glu-20 the composition is skewed to polar residues. The tract at residues Met-1–Gln-31 is disordered. Positions Leu-56 to Gln-115 form a DNA-binding region, homeobox. The tract at residues Leu-116–Ile-151 is leucine-zipper. Residues Ser-219 to Gly-238 are compositionally biased toward polar residues. The tract at residues Ser-219 to Thr-241 is disordered.

It belongs to the HD-ZIP homeobox family. Class I subfamily. Widely expressed with a lower level in siliques.

The protein localises to the nucleus. Its function is as follows. Probable transcription factor that may function as a negative regulator of the flowering time response to photoperiod. May act to repress cell expansion during plant development. This Arabidopsis thaliana (Mouse-ear cress) protein is Homeobox-leucine zipper protein ATHB-16 (ATHB-16).